The primary structure comprises 752 residues: Reticulon-1-B (752 aa).

Disordered stretches follow at residues 1 to 57, 264 to 319, 334 to 424, and 444 to 465; these read MAAN…TSTD, EYPG…SEKQ, KAKE…SPSI, and ESCD…SPMM. The span at 264–273 shows a compositional bias: polar residues; the sequence is EYPGNQQGKS. Over residues 334 to 361 the composition is skewed to basic and acidic residues; it reads KAKEGTKRFSSETNDEKQSRSFHAEKQD. Residues 363 to 383 show a composition bias toward polar residues; it reads TVMSTEATSASHYTKASSAES. The region spanning 566-752 is the Reticulon domain; it reads AIDLLYWRDV…AKIPGTKQKE (187 aa). The next 2 helical transmembrane spans lie at 580–600 and 684–704; these read IVFG…VVSV and VLMW…LLIM.

As to expression, isoform A and isoform C are both expressed in the animal hemisphere (presumptive neural ectoderm) of blastula and gastrula stage embryos, and along the anterior neural border, in the panplacodal primordium, and in the dorsolateral side of archenteron roof of late neurula embryos. At the tailbud stage, expression of the isoforms begin to differ. Isoform A localizes to the cranial placodes including the trigeminal placode, lateral line placode, olfactory placode and otic vesicle. Isoform C localizes to the central nervous system, including the spinal cord, prosencephalon, mesencephalon and rhombencephalon, as well as the lateral line placode, otic vesicle and pronephros.

The protein localises to the endoplasmic reticulum membrane. The protein resides in the nucleus. Its function is as follows. Inhibits amyloid precursor protein processing, probably by blocking BACE1 activity. This is Reticulon-1-B (rtn1-b) from Xenopus laevis (African clawed frog).